The chain runs to 423 residues: SH2 domain-containing protein 5 (423 aa).

Positions alanine 28–tyrosine 146 constitute a PID domain. One can recognise an SH2 domain in the interval tryptophan 296–tyrosine 392. A disordered region spans residues glutamate 394–glycine 423. Over residues glycine 398–leucine 410 the composition is skewed to low complexity.

As to quaternary structure, interacts with BCR.

It is found in the postsynaptic density. May be involved in synaptic plasticity regulation through the control of Rac-GTP levels. The polypeptide is SH2 domain-containing protein 5 (Pongo abelii (Sumatran orangutan)).